The following is a 229-amino-acid chain: NAD(P)H-quinone oxidoreductase subunit K, chloroplastic (229 aa).

[4Fe-4S] cluster contacts are provided by C43, C44, C108, and C139.

The protein belongs to the complex I 20 kDa subunit family. As to quaternary structure, NDH is composed of at least 16 different subunits, 5 of which are encoded in the nucleus. Requires [4Fe-4S] cluster as cofactor.

Its subcellular location is the plastid. The protein localises to the chloroplast thylakoid membrane. It carries out the reaction a plastoquinone + NADH + (n+1) H(+)(in) = a plastoquinol + NAD(+) + n H(+)(out). The enzyme catalyses a plastoquinone + NADPH + (n+1) H(+)(in) = a plastoquinol + NADP(+) + n H(+)(out). In terms of biological role, NDH shuttles electrons from NAD(P)H:plastoquinone, via FMN and iron-sulfur (Fe-S) centers, to quinones in the photosynthetic chain and possibly in a chloroplast respiratory chain. The immediate electron acceptor for the enzyme in this species is believed to be plastoquinone. Couples the redox reaction to proton translocation, and thus conserves the redox energy in a proton gradient. The sequence is that of NAD(P)H-quinone oxidoreductase subunit K, chloroplastic from Aethionema cordifolium (Lebanon stonecress).